Consider the following 189-residue polypeptide: Xanthine phosphoribosyltransferase (189 aa).

Residues leucine 20 and asparagine 27 each coordinate xanthine. 128–132 (ANGEA) contributes to the 5-phospho-alpha-D-ribose 1-diphosphate binding site. Position 156 (lysine 156) interacts with xanthine.

Belongs to the purine/pyrimidine phosphoribosyltransferase family. Xpt subfamily. As to quaternary structure, homodimer.

Its subcellular location is the cytoplasm. It catalyses the reaction XMP + diphosphate = xanthine + 5-phospho-alpha-D-ribose 1-diphosphate. It participates in purine metabolism; XMP biosynthesis via salvage pathway; XMP from xanthine: step 1/1. In terms of biological role, converts the preformed base xanthine, a product of nucleic acid breakdown, to xanthosine 5'-monophosphate (XMP), so it can be reused for RNA or DNA synthesis. The chain is Xanthine phosphoribosyltransferase from Clostridium acetobutylicum (strain ATCC 824 / DSM 792 / JCM 1419 / IAM 19013 / LMG 5710 / NBRC 13948 / NRRL B-527 / VKM B-1787 / 2291 / W).